A 166-amino-acid chain; its full sequence is Large ribosomal subunit protein eL14 (166 aa).

The disordered stretch occupies residues 135–166 (KADGTPRVLKKDRRERLRAEKAKGGKKAAAKK). Over residues 146-157 (DRRERLRAEKAK) the composition is skewed to basic and acidic residues.

The protein belongs to the eukaryotic ribosomal protein eL14 family.

This Drosophila melanogaster (Fruit fly) protein is Large ribosomal subunit protein eL14 (RpL14).